The following is a 160-amino-acid chain: Epithelial membrane protein 1 (160 aa).

Residues 1 to 21 (MLVLLAGLFVVHIATAIMLFV) traverse the membrane as a helical segment. N-linked (GlcNAc...) asparagine glycosylation is found at N35 and N43. The next 2 helical transmembrane spans lie at 67-87 (FMIL…FQLF) and 95-115 (FFLS…GVSI). An N-linked (GlcNAc...) asparagine glycan is attached at N128. A helical membrane pass occupies residues 137 to 157 (FILTWICFCFSFIIGILYMVL).

The protein belongs to the PMP-22/EMP/MP20 family.

It is found in the membrane. The protein is Epithelial membrane protein 1 (Emp1) of Mus musculus (Mouse).